Reading from the N-terminus, the 282-residue chain is MNRIILPSPAKLNLFLYINGRRADGYHQLQTLFQFLDVGDEIDISITTSNSTIELVNDIAGVATEDNLIYRAAKLLQKKTACQQGAKIAVAKHLPMGGGVGGGSSNAATVLVGLNYLWQTGLSLAQLAELGLSLGADVPIFVAGKTAFAEGIGEILTPCELPEKWYLVLKPNISIETSSIFKDPKLPRNTPERSLSALLAEDWGNDCEKVVREHYSEVEDLIQELLQYAPFRLTGTGACIFAEFASKAEAEKVFNCRPHNMYGFVAKGQNISPLHKKLNLFS.

Lysine 11 is a catalytic residue. ATP is bound at residue proline 95–serine 105. Aspartate 137 is a catalytic residue.

It belongs to the GHMP kinase family. IspE subfamily.

It catalyses the reaction 4-CDP-2-C-methyl-D-erythritol + ATP = 4-CDP-2-C-methyl-D-erythritol 2-phosphate + ADP + H(+). It participates in isoprenoid biosynthesis; isopentenyl diphosphate biosynthesis via DXP pathway; isopentenyl diphosphate from 1-deoxy-D-xylulose 5-phosphate: step 3/6. In terms of biological role, catalyzes the phosphorylation of the position 2 hydroxy group of 4-diphosphocytidyl-2C-methyl-D-erythritol. The protein is 4-diphosphocytidyl-2-C-methyl-D-erythritol kinase of Haemophilus ducreyi (strain 35000HP / ATCC 700724).